A 595-amino-acid polypeptide reads, in one-letter code: Trafficking protein particle complex subunit 14 (595 aa).

Disordered stretches follow at residues 84-111 (ASVS…ECVE) and 494-513 (SNPP…SSPA).

As to quaternary structure, component of the multisubunit TRAPP II complex, which includes at least TRAPPC1, TRAPPC2, TRAPPC2L, TRAPPC3, TRAPPC4, TRAPPC5, TRAPPC6A/B, TRAPPC9, TRAPPC10 and TRAPPC14. TRAPPC9, TRAPPC10 and TRAPPC14 are specific subunits of the TRAPP II complex. Interacts with alpha-tubulin during mitosis.

Its subcellular location is the cytoplasm. The protein localises to the cytoskeleton. It is found in the spindle. It localises to the vesicle. The protein resides in the midbody. In terms of biological role, specific subunit of the TRAPP (transport protein particle) II complex, a highly conserved vesicle tethering complex that functions in late Golgi trafficking as a membrane tether. TRAPP II complex also has GEF activity toward RAB1A. TRAPPC14 is required for ciliogenesis. The chain is Trafficking protein particle complex subunit 14 (trappc14) from Danio rerio (Zebrafish).